A 353-amino-acid polypeptide reads, in one-letter code: Melatonin receptor type 1A (353 aa).

Residues 1 to 15 are compositionally biased toward polar residues; it reads MKGNGSTLLNASQQA. The interval 1 to 23 is disordered; sequence MKGNGSTLLNASQQAPGVGEGGG. At 1–32 the chain is on the extracellular side; that stretch reads MKGNGSTLLNASQQAPGVGEGGGPRPSWLAST. Residues Asn4 and Asn10 are each glycosylated (N-linked (GlcNAc...) asparagine). Residues 33–53 traverse the membrane as a helical segment; it reads LAFILIFTIVVDILGNLLVIL. Over 54–66 the chain is Cytoplasmic; sequence SVYRNKKLRNAGN. A helical membrane pass occupies residues 67 to 87; sequence IFVVSLAIADLVVAIYPYPLV. At 88 to 105 the chain is on the extracellular side; that stretch reads LTSIFNNGWNLGYLHCQI. Cys103 and Cys180 form a disulfide bridge. Residues 106–126 form a helical membrane-spanning segment; the sequence is SAFLMGLSVIGSIFNITGIAI. Topologically, residues 127-147 are cytoplasmic; that stretch reads NRYCYICHSLKYDRLYSNKNS. Residues 148–168 traverse the membrane as a helical segment; it reads LCYVFLIWVLTLVAIMPNLQT. Topologically, residues 169–190 are extracellular; that stretch reads GTLQYDPRIYSCTFTQSVSSAY. A helical membrane pass occupies residues 191–211; the sequence is TIAVVVFHFIVPMIIVIFCYL. The Cytoplasmic portion of the chain corresponds to 212 to 243; that stretch reads RIWILVLQVRRRVKPDSKPRLKPQDFRNFVTM. A helical transmembrane segment spans residues 244-264; sequence FVVFVLFAICWAPLNFIGLIV. Residues 265–277 lie on the Extracellular side of the membrane; it reads ASDPATMAPRIPE. A helical membrane pass occupies residues 278 to 298; it reads WLFVASYYMAYFNSCLNAIIY. The Cytoplasmic segment spans residues 299–353; it reads GLLNQNFRQEYKRILVSLFTAKMCFVDSSNDPADKIKCKPAPLIANNNLIKVDSV.

It belongs to the G-protein coupled receptor 1 family. As to expression, at least in the brain, more precisely in the pars tuberalis and the suprachiasmatic nucleus.

The protein resides in the cell membrane. High affinity receptor for melatonin. Likely to mediate the reproductive and circadian actions of melatonin. The activity of this receptor is mediated by pertussis toxin sensitive G proteins that inhibit adenylate cyclase activity. Possibly involved in sleep induction, by melatonin activation of the potassium channel KCNMA1/BK and the dissociation of G-beta and G-gamma subunits, thereby decreasing synaptic transmission. This is Melatonin receptor type 1A (MTNR1A) from Phodopus sungorus (Striped hairy-footed hamster).